We begin with the raw amino-acid sequence, 85 residues long: MEKDLDYTMKFEGIPEDRMSVGDTIDFVYKALVEKGYNPINQIIGYLLSGDSSYITSHKNARAIIKKFERDEILEEVITHYLNRK.

It belongs to the UPF0297 family.

This chain is UPF0297 protein CD630_12830, found in Clostridioides difficile (strain 630) (Peptoclostridium difficile).